Reading from the N-terminus, the 225-residue chain is Chalcone--flavanone isomerase 3 (225 aa).

T51, N116, and T193 together coordinate substrate.

Belongs to the chalcone isomerase family.

The enzyme catalyses a chalcone = a flavanone.. The protein operates within secondary metabolite biosynthesis; flavonoid biosynthesis. In terms of biological role, catalyzes the intramolecular cyclization of bicyclic chalcones into tricyclic (S)-flavanones. Responsible for the isomerization of 4,2',4',6'-tetrahydroxychalcone (also termed chalcone) into naringenin. The sequence is that of Chalcone--flavanone isomerase 3 (CHI3) from Lotus japonicus (Lotus corniculatus var. japonicus).